Here is a 495-residue protein sequence, read N- to C-terminus: Glycogen synthase (495 aa).

Position 24 (Lys-24) interacts with ADP-alpha-D-glucose.

Belongs to the glycosyltransferase 1 family. Bacterial/plant glycogen synthase subfamily.

The enzyme catalyses [(1-&gt;4)-alpha-D-glucosyl](n) + ADP-alpha-D-glucose = [(1-&gt;4)-alpha-D-glucosyl](n+1) + ADP + H(+). It participates in glycan biosynthesis; glycogen biosynthesis. In terms of biological role, synthesizes alpha-1,4-glucan chains using ADP-glucose. In Nitrosomonas europaea (strain ATCC 19718 / CIP 103999 / KCTC 2705 / NBRC 14298), this protein is Glycogen synthase.